A 364-amino-acid chain; its full sequence is Peroxisome biogenesis protein 3-2 (364 aa).

The chain crosses the membrane as a helical span at residues 15–32 (VLVTAGCLGSGYLLYKLY). Positions 33–62 (NSHTRRLADLERELAHERENDEIIKTQMKA) form a coiled coil.

Belongs to the peroxin-3 family.

Its subcellular location is the peroxisome membrane. Involved in morphology determination of peroxisomes, but not in import of peroxisomal matrix proteins. May act as a docking factor for PEX19 and be necessary for the import of peroxisomal membrane proteins in the peroxisomes. The sequence is that of Peroxisome biogenesis protein 3-2 (PEX3-2) from Arabidopsis thaliana (Mouse-ear cress).